The chain runs to 202 residues: Inosine triphosphate pyrophosphatase (202 aa).

8–13 (TGNANK) is a binding site for ITP. E55 serves as a coordination point for Mg(2+). ITP-binding positions include K67, 83–84 (DT), K100, 159–162 (FGWD), K182, and 187–188 (HR).

It belongs to the HAM1 NTPase family. Homodimer. Mg(2+) is required as a cofactor. Mn(2+) serves as cofactor.

The protein resides in the cytoplasm. It is found in the nucleus. It carries out the reaction ITP + H2O = IMP + diphosphate + H(+). The enzyme catalyses dITP + H2O = dIMP + diphosphate + H(+). It catalyses the reaction XTP + H2O = XMP + diphosphate + H(+). Pyrophosphatase that hydrolyzes non-canonical purine nucleotides such as inosine triphosphate (ITP), deoxyinosine triphosphate (dITP) or xanthosine 5'-triphosphate (XTP) to their respective monophosphate derivatives. The enzyme does not distinguish between the deoxy- and ribose forms. Probably excludes non-canonical purines from RNA and DNA precursor pools, thus preventing their incorporation into RNA and DNA and avoiding chromosomal lesions. In Candida albicans (strain SC5314 / ATCC MYA-2876) (Yeast), this protein is Inosine triphosphate pyrophosphatase.